Here is a 231-residue protein sequence, read N- to C-terminus: mRNA-decapping enzyme subunit 1 (231 aa).

The disordered stretch occupies residues 92–120 (QNGSNNIQVNNGSDNSNRNSSGNGNSYKS). Low complexity predominate over residues 101-120 (NNGSDNSNRNSSGNGNSYKS).

The protein belongs to the DCP1 family. Component of the decapping complex composed of DCP1 and DCP2. Interacts with mRNAs, DHH1, LSM1, LSM2, LSM3, LSM4, LSM5, LSM6, LSM7, and the cap-binding proteins PAB1 and TIF4632/eIF-4G. Phosphorylated.

It localises to the cytoplasm. Its subcellular location is the P-body. Its function is as follows. Component of the decapping complex necessary for the degradation of mRNAs, both in normal mRNA turnover and in nonsense-mediated mRNA decay. Removes the 7-methyl guanine cap structure from mRNA molecules, yielding a 5'-phosphorylated mRNA fragment and 7m-GDP. Decapping is the major pathway of mRNA degradation in yeast. It occurs through deadenylation, decapping and subsequent 5' to 3' exonucleolytic decay of the transcript body. DCP1 is activated by the DEAD-box helicase DHH1 and destabilizes the eIF-4F cap-binding complex from the mRNA. This Saccharomyces cerevisiae (strain ATCC 204508 / S288c) (Baker's yeast) protein is mRNA-decapping enzyme subunit 1 (DCP1).